Consider the following 451-residue polypeptide: Acetylornithine aminotransferase, mitochondrial (451 aa).

Lys-302 carries the N6-(pyridoxal phosphate)lysine modification.

The protein belongs to the class-III pyridoxal-phosphate-dependent aminotransferase family. Pyridoxal 5'-phosphate is required as a cofactor. Found at highest levels in nodules, confined to the infected cells.

It is found in the mitochondrion. It catalyses the reaction N(2)-acetyl-L-ornithine + 2-oxoglutarate = N-acetyl-L-glutamate 5-semialdehyde + L-glutamate. Its pathway is amino-acid biosynthesis; L-arginine biosynthesis; N(2)-acetyl-L-ornithine from L-glutamate: step 4/4. Functionally, involved in the biosynthesis of citrulline. This Alnus glutinosa (European alder) protein is Acetylornithine aminotransferase, mitochondrial (AG118).